Here is a 649-residue protein sequence, read N- to C-terminus: Transcription factor E2-alpha (649 aa).

Disordered regions lie at residues Arg37–Asn107, Gly132–Pro207, Thr296–Gly325, and Asp339–Pro376. A compositionally biased stretch (polar residues) spans Ser57–Asp71. Residues Gly132–Ser148 show a composition bias toward low complexity. Ser135 and Ser140 each carry phosphoserine. A Nuclear localization signal motif is present at residues Pro171–Val177. A compositionally biased stretch (low complexity) spans Asp339–Pro352. Thr351 is modified (phosphothreonine). Ser355 carries the phosphoserine modification. The residue at position 367 (Arg367) is an Omega-N-methylarginine. Position 375 is a phosphoserine (Ser375). Positions Leu385–Leu420 are leucine-zipper. Positions Ala435–Val547 are disordered. Low complexity predominate over residues Ser459–Ser477. Lys494 participates in a covalent cross-link: Glycyl lysine isopeptide (Lys-Gly) (interchain with G-Cter in SUMO2). Ser524 bears the Phosphoserine mark. A Phosphothreonine modification is found at Asp526. Basic and acidic residues predominate over residues Gln537 to Val547. Positions Glu544–Leu597 constitute a bHLH domain. A Glycyl lysine isopeptide (Lys-Gly) (interchain with G-Cter in SUMO2) cross-link involves residue Lys620.

In terms of assembly, homodimer. Heterodimer; efficient DNA binding requires dimerization with another bHLH protein. Forms a heterodimer with TWIST1 and TWIST2. Forms a heterodimer with NEUROD1; the heterodimer is inhibited in presence of ID2, but not NR0B2, to E-box element. Forms a heterodimer with TCF15; the heterodimer binds E-box element. Forms a heterodimer with MYOG; heterodimerization enhances MYOG DNA-binding and transcriptional activities. Forms a heterodimer with ATOH8; repress transcription of TCF3 and TCF3-NEUROG3 dimer-induced transactivation of E box-dependent promoters. Component of a nuclear TAL-1 complex composed at least of CBFA2T3, LDB1, TAL1 and TCF3. Interacts with NEUROD2. Interacts with EP300. Interacts with PTF1A, TGFB1I1. Interacts with UBE2I. Interacts with BHLHA9. Interacts with ASB2; the interaction is mediated by SKP2 and targets TCF3 for Notch-induced proteasomal degradation. Interacts with transcription factor ASCL5/AmeloD. Interacts with RALGAPA1. Interacts with FIGLA. As to quaternary structure, forms a heterodimer with ATOH7; required for ATOH7 DNA-binding. In terms of processing, phosphorylated following NGF stimulation. Undergoes Notch-induced ubiquitination and subsequent proteasomal degradation which is mediated by ASB1 or ASB2, the substrate-recognition components of probable ECS E3 ubiquitin-protein ligase complexes.

The protein resides in the nucleus. Its function is as follows. Transcriptional regulator involved in the initiation of neuronal differentiation and mesenchymal to epithelial transition. Heterodimers between TCF3 and tissue-specific basic helix-loop-helix (bHLH) proteins play major roles in determining tissue-specific cell fate during embryogenesis, like muscle or early B-cell differentiation. Together with TCF15, required for the mesenchymal to epithelial transition. Dimers bind DNA on E-box motifs: 5'-CANNTG-3'. Binds to the kappa-E2 site in the kappa immunoglobulin gene enhancer. Binds to the consensus sequence CAC/GCTGT/C present, in the chymotrypsin, insulin, AP-4, and several other gene enhancer motifs. In terms of biological role, facilitates ATOH7 binding to DNA at the consensus sequence 5'-CAGGTG-3', and positively regulates transcriptional activity. This is Transcription factor E2-alpha (Tcf3) from Rattus norvegicus (Rat).